Reading from the N-terminus, the 220-residue chain is Deep-sea actinoporin Cjtox I (220 aa).

A signal peptide spans 1-19 (MNRLIILCLVAATIYSTIA). Residues 20–42 (LPMKEDISNEERPTSVNEKPVKK) constitute a propeptide that is removed on maturation. Residues S96, V128, S146, P148, Y174, Y178, and Y179 each coordinate phosphocholine. Residues 146 to 161 (SVPYDYNWYSNWWNIK) are trp-rich region, which is important for the binding to lipid membrane. The short motif at 185–187 (KGN) is the Cell attachment site, crucial for protein stability element.

This sequence belongs to the actinoporin family. Sea anemone subfamily. In terms of assembly, octamer or nonamer in membranes. Monomer in the soluble state. As to expression, expressed in tentacles.

Its subcellular location is the secreted. The protein localises to the nematocyst. The protein resides in the target cell membrane. In terms of biological role, probably acts in predation. Pore-forming protein that forms cations-selective hydrophilic pores of around 1 nm and causes cytolysis. Pore formation is a multi-step process that involves specific recognition of membrane sphingomyelin (but neither cholesterol nor phosphatidylcholine) using aromatic rich region and adjacent phosphocholine (POC) binding site, firm binding to the membrane (mainly driven by hydrophobic interactions) accompanied by the transfer of the N-terminal region to the lipid-water interface and finally pore formation after oligomerization of monomers. Shows hemolytic activity on equine erythrocytes. Hemolysis is moderately inhibited in presence of sphingomyelin, suggesting that this protein targets sphingomyelin. This chain is Deep-sea actinoporin Cjtox I, found in Cribrinopsis japonica (Deep-sea anemone).